The primary structure comprises 145 residues: D-aminoacyl-tRNA deacylase (145 aa).

A Gly-cisPro motif, important for rejection of L-amino acids motif is present at residues 137–138 (GP).

The protein belongs to the DTD family. Homodimer.

Its subcellular location is the cytoplasm. The enzyme catalyses glycyl-tRNA(Ala) + H2O = tRNA(Ala) + glycine + H(+). It carries out the reaction a D-aminoacyl-tRNA + H2O = a tRNA + a D-alpha-amino acid + H(+). Its function is as follows. An aminoacyl-tRNA editing enzyme that deacylates mischarged D-aminoacyl-tRNAs. Also deacylates mischarged glycyl-tRNA(Ala), protecting cells against glycine mischarging by AlaRS. Acts via tRNA-based rather than protein-based catalysis; rejects L-amino acids rather than detecting D-amino acids in the active site. By recycling D-aminoacyl-tRNA to D-amino acids and free tRNA molecules, this enzyme counteracts the toxicity associated with the formation of D-aminoacyl-tRNA entities in vivo and helps enforce protein L-homochirality. In Limosilactobacillus reuteri (strain DSM 20016) (Lactobacillus reuteri), this protein is D-aminoacyl-tRNA deacylase.